A 159-amino-acid polypeptide reads, in one-letter code: Cyclic pyranopterin monophosphate synthase (159 aa).

Residues 76–78 and 114–115 each bind substrate; these read LCH and ME. D129 is an active-site residue.

It belongs to the MoaC family. As to quaternary structure, homohexamer; trimer of dimers.

The catalysed reaction is (8S)-3',8-cyclo-7,8-dihydroguanosine 5'-triphosphate = cyclic pyranopterin phosphate + diphosphate. It participates in cofactor biosynthesis; molybdopterin biosynthesis. Functionally, catalyzes the conversion of (8S)-3',8-cyclo-7,8-dihydroguanosine 5'-triphosphate to cyclic pyranopterin monophosphate (cPMP). This chain is Cyclic pyranopterin monophosphate synthase, found in Oleidesulfovibrio alaskensis (strain ATCC BAA-1058 / DSM 17464 / G20) (Desulfovibrio alaskensis).